We begin with the raw amino-acid sequence, 145 residues long: D-aminoacyl-tRNA deacylase (145 aa).

Positions 137–138 match the Gly-cisPro motif, important for rejection of L-amino acids motif; it reads GP.

The protein belongs to the DTD family. As to quaternary structure, homodimer.

It localises to the cytoplasm. It catalyses the reaction glycyl-tRNA(Ala) + H2O = tRNA(Ala) + glycine + H(+). It carries out the reaction a D-aminoacyl-tRNA + H2O = a tRNA + a D-alpha-amino acid + H(+). Its function is as follows. An aminoacyl-tRNA editing enzyme that deacylates mischarged D-aminoacyl-tRNAs. Also deacylates mischarged glycyl-tRNA(Ala), protecting cells against glycine mischarging by AlaRS. Acts via tRNA-based rather than protein-based catalysis; rejects L-amino acids rather than detecting D-amino acids in the active site. By recycling D-aminoacyl-tRNA to D-amino acids and free tRNA molecules, this enzyme counteracts the toxicity associated with the formation of D-aminoacyl-tRNA entities in vivo and helps enforce protein L-homochirality. In Shewanella loihica (strain ATCC BAA-1088 / PV-4), this protein is D-aminoacyl-tRNA deacylase.